Reading from the N-terminus, the 196-residue chain is ATP-dependent Clp protease proteolytic subunit (196 aa).

Serine 96 (nucleophile) is an active-site residue. Residue histidine 121 is part of the active site.

The protein belongs to the peptidase S14 family. Fourteen ClpP subunits assemble into 2 heptameric rings which stack back to back to give a disk-like structure with a central cavity, resembling the structure of eukaryotic proteasomes.

Its subcellular location is the cytoplasm. It carries out the reaction Hydrolysis of proteins to small peptides in the presence of ATP and magnesium. alpha-casein is the usual test substrate. In the absence of ATP, only oligopeptides shorter than five residues are hydrolyzed (such as succinyl-Leu-Tyr-|-NHMec, and Leu-Tyr-Leu-|-Tyr-Trp, in which cleavage of the -Tyr-|-Leu- and -Tyr-|-Trp bonds also occurs).. In terms of biological role, cleaves peptides in various proteins in a process that requires ATP hydrolysis. Has a chymotrypsin-like activity. Plays a major role in the degradation of misfolded proteins. The chain is ATP-dependent Clp protease proteolytic subunit from Streptococcus pyogenes serotype M3 (strain SSI-1).